A 499-amino-acid chain; its full sequence is Putative lipase atg15 (499 aa).

Residues 1-9 (MSIGEVSDS) lie on the Cytoplasmic side of the membrane. A helical; Signal-anchor for type II membrane protein membrane pass occupies residues 10-30 (AGHLASLVLPIEVAPIAPLIP). Residues 31–499 (EPPATAEHIF…PDSPERNEEM (469 aa)) are Lumenal-facing. 5 N-linked (GlcNAc...) asparagine glycosylation sites follow: Asn-170, Asn-191, Asn-192, Asn-250, and Asn-274. Ser-290 functions as the Charge relay system in the catalytic mechanism. An N-linked (GlcNAc...) asparagine glycan is attached at Asn-436. The disordered stretch occupies residues 436 to 499 (NGTETTTTSS…PDSPERNEEM (64 aa)). Residues 438–454 (TETTTTSSAPTTTSISR) show a composition bias toward low complexity.

It belongs to the AB hydrolase superfamily. Lipase family. In terms of assembly, binds to both phosphatidylinositol (PI) and phosphatidylinositol 3,5-bisphosphate (PIP2).

It is found in the endosome. Its subcellular location is the multivesicular body membrane. The protein resides in the prevacuolar compartment membrane. The catalysed reaction is a triacylglycerol + H2O = a diacylglycerol + a fatty acid + H(+). Lipase which is essential for lysis of subvacuolar cytoplasm to vacuole targeted bodies and intravacuolar autophagic bodies. Involved in the lysis of intravacuolar multivesicular body (MVB) vesicles. The intravacuolar membrane disintegration by atg15 is critical to life span extension. The sequence is that of Putative lipase atg15 (atg15) from Chaetomium globosum (strain ATCC 6205 / CBS 148.51 / DSM 1962 / NBRC 6347 / NRRL 1970) (Soil fungus).